Here is a 668-residue protein sequence, read N- to C-terminus: UvrABC system protein B (668 aa).

Residues 25-414 enclose the Helicase ATP-binding domain; that stretch reads RGLHAGARFQ…IVEQLIRPTG (390 aa). ATP is bound at residue 38 to 45; that stretch reads GVTGSGKT. A Beta-hairpin motif is present at residues 91–114; sequence YYDYYQPESYVPARDLYIEKDASI. The region spanning 431–594 is the Helicase C-terminal domain; that stretch reads DICQRVKACS…TIKKSIEDIL (164 aa). The UVR domain maps to 627-662; sequence KKMVQALRLHMKVCARELRFEEAALIRDKILQLQRQ.

It belongs to the UvrB family. Forms a heterotetramer with UvrA during the search for lesions. Interacts with UvrC in an incision complex.

The protein resides in the cytoplasm. Functionally, the UvrABC repair system catalyzes the recognition and processing of DNA lesions. A damage recognition complex composed of 2 UvrA and 2 UvrB subunits scans DNA for abnormalities. Upon binding of the UvrA(2)B(2) complex to a putative damaged site, the DNA wraps around one UvrB monomer. DNA wrap is dependent on ATP binding by UvrB and probably causes local melting of the DNA helix, facilitating insertion of UvrB beta-hairpin between the DNA strands. Then UvrB probes one DNA strand for the presence of a lesion. If a lesion is found the UvrA subunits dissociate and the UvrB-DNA preincision complex is formed. This complex is subsequently bound by UvrC and the second UvrB is released. If no lesion is found, the DNA wraps around the other UvrB subunit that will check the other stand for damage. The sequence is that of UvrABC system protein B from Treponema pallidum (strain Nichols).